The primary structure comprises 582 residues: DNA primase (582 aa).

The CHC2-type zinc finger occupies 40–64 (CPFHHEKTPSFTVSQKKQFYHCFGC). The Toprim domain occupies 259–341 (EMLLVVEGYM…GRQLKFVFLP (83 aa)). Mg(2+)-binding residues include Glu-265, Asp-309, and Asp-311.

This sequence belongs to the DnaG primase family. Monomer. Interacts with DnaB. It depends on Zn(2+) as a cofactor. Mg(2+) is required as a cofactor.

The enzyme catalyses ssDNA + n NTP = ssDNA/pppN(pN)n-1 hybrid + (n-1) diphosphate.. RNA polymerase that catalyzes the synthesis of short RNA molecules used as primers for DNA polymerase during DNA replication. In Pasteurella multocida (strain Pm70), this protein is DNA primase.